We begin with the raw amino-acid sequence, 240 residues long: Probable transcriptional regulator ycf27 (240 aa).

Residues 5–118 enclose the Response regulatory domain; sequence KILVIDDEAS…ELEARIRSVL (114 aa). A 4-aspartylphosphate modification is found at Asp-54. Positions 74–92 form a DNA-binding region, H-T-H motif; the sequence is DVPIIMLTALSDVSDRITG. The segment at residues 133–234 is a DNA-binding region (ompR/PhoB-type); that stretch reads SGIINIGFLK…ARGTGYLFQR (102 aa).

It localises to the plastid. Its subcellular location is the chloroplast. Probable promoter-specific protein mediating the interaction between DNA and RNA polymerase. The sequence is that of Probable transcriptional regulator ycf27 (ycf27) from Porphyridium aerugineum (Red microalga).